Here is a 441-residue protein sequence, read N- to C-terminus: ATP-dependent protease ATPase subunit HslU (441 aa).

ATP contacts are provided by residues Ile18, 60–65 (GVGKTE), Asp254, Glu319, and Arg391.

This sequence belongs to the ClpX chaperone family. HslU subfamily. As to quaternary structure, a double ring-shaped homohexamer of HslV is capped on each side by a ring-shaped HslU homohexamer. The assembly of the HslU/HslV complex is dependent on binding of ATP.

It is found in the cytoplasm. Functionally, ATPase subunit of a proteasome-like degradation complex; this subunit has chaperone activity. The binding of ATP and its subsequent hydrolysis by HslU are essential for unfolding of protein substrates subsequently hydrolyzed by HslV. HslU recognizes the N-terminal part of its protein substrates and unfolds these before they are guided to HslV for hydrolysis. The sequence is that of ATP-dependent protease ATPase subunit HslU from Shewanella sediminis (strain HAW-EB3).